A 404-amino-acid polypeptide reads, in one-letter code: Glycerol-1-phosphate dehydrogenase [NAD(P)+] (404 aa).

NAD(+)-binding positions include D55, 117 to 121, and 139 to 142; these read GTVHD and TAPS. D144 contributes to the substrate binding site. S148 is an NAD(+) binding site. D191 lines the substrate pocket. Ni(2+) is bound by residues D191 and H271. Substrate is bound at residue H275. Residue H291 coordinates Ni(2+).

This sequence belongs to the glycerol-1-phosphate dehydrogenase family. In terms of assembly, homodimer. Requires Ni(2+) as cofactor.

Its subcellular location is the cytoplasm. The catalysed reaction is sn-glycerol 1-phosphate + NAD(+) = dihydroxyacetone phosphate + NADH + H(+). It carries out the reaction sn-glycerol 1-phosphate + NADP(+) = dihydroxyacetone phosphate + NADPH + H(+). Functionally, catalyzes the NAD(P)H-dependent reduction of dihydroxyacetonephosphate (DHAP or glycerone phosphate) to glycerol 1-phosphate (G1P). The G1P thus generated is probably used for the synthesis of phosphoglycerolipids in Gram-positive bacterial species. This is Glycerol-1-phosphate dehydrogenase [NAD(P)+] from Geobacillus thermodenitrificans (strain NG80-2).